Reading from the N-terminus, the 547-residue chain is Elongator complex protein 3 (547 aa).

Residues 82-372 (RTASGIAVVA…YRVQRDIPMP (291 aa)) form the Radical SAM core domain. Residues Cys99, Cys109, and Cys112 each contribute to the [4Fe-4S] cluster site. Position 161 is a phosphoserine (Ser161). Residue Lys164 participates in acetyl-CoA binding. A Phosphotyrosine modification is found at Tyr202. At Lys229 the chain carries N6-methyllysine. Tyr251 bears the Phosphotyrosine mark. The region spanning 396–547 (IQCRDVRTRE…QGPYMVKTLE (152 aa)) is the N-acetyltransferase domain. Residues 474–477 (ELHV), 497–499 (FGM), and Tyr530 contribute to the acetyl-CoA site.

It belongs to the ELP3 family. Component of the elongator complex which consists of ELP1, ELP2, ELP3, ELP4, ELP5 and ELP6. ELP1, ELP2 and ELP3 form the elongator core complex. Interacts with alpha-tubulin. It depends on [4Fe-4S] cluster as a cofactor. In terms of processing, tyrosine-phosphorylated; phosphorylation on Tyr-202 does not affect elongator complex integrity or ELP3 protein stability. Also serine/threonine-phosphorylated.

The protein resides in the cytoplasm. The protein localises to the nucleus. The enzyme catalyses uridine(34) in tRNA + acetyl-CoA + S-adenosyl-L-methionine + H2O = 5-(carboxymethyl)uridine(34) in tRNA + 5'-deoxyadenosine + L-methionine + CoA + 2 H(+). It participates in tRNA modification; 5-methoxycarbonylmethyl-2-thiouridine-tRNA biosynthesis. Its function is as follows. Catalytic tRNA acetyltransferase subunit of the elongator complex which is required for multiple tRNA modifications, including mcm5U (5-methoxycarbonylmethyl uridine), mcm5s2U (5-methoxycarbonylmethyl-2-thiouridine), and ncm5U (5-carbamoylmethyl uridine). In the elongator complex, acts as a tRNA uridine(34) acetyltransferase by mediating formation of carboxymethyluridine in the wobble base at position 34 in tRNAs. May also act as a protein lysine acetyltransferase by mediating acetylation of target proteins; such activity is however unclear in vivo and recent evidences suggest that ELP3 primarily acts as a tRNA acetyltransferase. Involved in neurogenesis: regulates the migration and branching of projection neurons in the developing cerebral cortex, through a process depending on alpha-tubulin acetylation. Required for acetylation of GJA1 in the developing cerebral cortex. This Bos taurus (Bovine) protein is Elongator complex protein 3.